Reading from the N-terminus, the 440-residue chain is MGKNVVVIGTQWGDEGKGKIVDWLTDHAQGVIRFQGGHNAGHTLVIGQGAAQREYKLNLVPSGIVREGVRCYIGNGVVLDAGHLLEEIGGLESVGVEVRSRLMISPGCPLILGYHVSLDKAREAARTQGKKIGTTGKGIGPTYEDKVARRALRVYDLFYPERFAEKLAEVLDYHNFVLTRHLNTEAVDFQAQLDAAMKHAESLRPLVHDVSAALYDAHQAGHNLLFEGAQGTLLDVDHGTYPYVTSSNCVAGQASAGSGVGPSMLHYVLGITKAYCTRVGGGPFPSELDIETDATPGHQMSDKGREIGTVTRRKRRCGWFDAAALRRSARINGLTGLCITKLDVLDGLSELEICTGYKLDGKVVDLLPVGAEDVARCEPIYEVMPGWQETTFGVKRWDDLPANARAYLKRLEELCGVPVDIVSTGPERDETIVLRHPFGA.

GTP-binding positions include G13–K19 and G41–T43. Catalysis depends on D14, which acts as the Proton acceptor. 2 residues coordinate Mg(2+): D14 and G41. Residues D14 to K17, N39 to H42, T135, R149, Q230, T245, and R313 contribute to the IMP site. The Proton donor role is filled by H42. T309–R315 serves as a coordination point for substrate. GTP contacts are provided by residues R315 and K341–D343.

The protein belongs to the adenylosuccinate synthetase family. As to quaternary structure, homodimer. Requires Mg(2+) as cofactor.

The protein localises to the plastid. The protein resides in the chloroplast. The enzyme catalyses IMP + L-aspartate + GTP = N(6)-(1,2-dicarboxyethyl)-AMP + GDP + phosphate + 2 H(+). It functions in the pathway purine metabolism; AMP biosynthesis via de novo pathway; AMP from IMP: step 1/2. Functionally, plays an important role in the de novo pathway and in the salvage pathway of purine nucleotide biosynthesis. Catalyzes the first committed step in the biosynthesis of AMP from IMP. The sequence is that of Adenylosuccinate synthetase 1, chloroplastic from Ricinus communis (Castor bean).